Here is a 333-residue protein sequence, read N- to C-terminus: Serine/threonine-protein phosphatase PP1-beta (333 aa).

Residues D63, H65, D91, and N123 each contribute to the Mn(2+) site. Residue H124 is the Proton donor of the active site. Mn(2+)-binding residues include H172 and H247. Residues 306–333 (GAGGVGSNRPVTPPRNAPAAQPKKGAKK) are disordered. Over residues 322–333 (APAAQPKKGAKK) the composition is skewed to low complexity.

The protein belongs to the PPP phosphatase family. PP-1 subfamily. Interacts with lab-1; the interaction is direct. Interacts with knl-1; the interaction is direct. It depends on Mn(2+) as a cofactor. As to expression, expressed in gonads, nervous system, intestine and muscles.

The protein resides in the cytoplasm. It is found in the nucleus. The enzyme catalyses O-phospho-L-seryl-[protein] + H2O = L-seryl-[protein] + phosphate. It carries out the reaction O-phospho-L-threonyl-[protein] + H2O = L-threonyl-[protein] + phosphate. With respect to regulation, inhibited by okadaic acid. Serine/threonine-protein phosphatase essential for chromosomal dynamics during meiosis and mitosis. During meiosis, promotes chromosomal cohesion and germline immortality via a small RNA-mediated genome silencing pathway. Antagonizes the function of air-2 kinase during meiosis I and mitosis to promote chromatid cohesion and spindle attachment. Dephosphorylates histone H3 at 'Ser-10'. Dephosphorylates histone H3 at 'Thr-3'. Also involved in the activation of chloride channel clh-3 during cell swelling and meiotic maturation. Promotes small RNA-mediated genome silencing over multiple generations. Essential for embryogenesis. The sequence is that of Serine/threonine-protein phosphatase PP1-beta from Caenorhabditis elegans.